A 199-amino-acid polypeptide reads, in one-letter code: Signal peptidase complex subunit 2 (199 aa).

Topologically, residues 1-49 (MGKKDEKSQQGEELVKVNKWDGSAVKHALDDAVKTCLLGDRPQLKEQFG) are cytoplasmic. The chain crosses the membrane as a helical span at residues 50 to 72 (LVNTRLALCALAVSVAIMAHAWD). Residues 73–81 (FTHPFPESR) are Lumenal-facing. The chain crosses the membrane as a helical span at residues 82–104 (PVLLFSVLAYFALLGILTLHSSF). Over 105 to 199 (REKGTFAVAL…KKNASSLSSN (95 aa)) the chain is Cytoplasmic.

The protein belongs to the SPCS2 family. In terms of assembly, component of the signal peptidase complex (SPC) composed of a catalytic subunit twr/SEC11 and three accessory subunits Spase12/SPCS1, Spase25/SPCS2 and Spase22-23/SPCS3. The complex induces a local thinning of the ER membrane which is used to measure the length of the signal peptide (SP) h-region of protein substrates. This ensures the selectivity of the complex towards h-regions shorter than 18-20 amino acids.

It is found in the endoplasmic reticulum membrane. Component of the signal peptidase complex (SPC) which catalyzes the cleavage of N-terminal signal sequences from nascent proteins as they are translocated into the lumen of the endoplasmic reticulum. Enhances the enzymatic activity of SPC and facilitates the interactions between different components of the translocation site. This chain is Signal peptidase complex subunit 2 (Spase25), found in Drosophila melanogaster (Fruit fly).